A 214-amino-acid chain; its full sequence is 3-demethoxyubiquinol 3-hydroxylase (214 aa).

E63, E93, H96, E145, E177, and H180 together coordinate Fe cation.

This sequence belongs to the COQ7 family. Fe cation serves as cofactor.

It localises to the cell membrane. It carries out the reaction a 5-methoxy-2-methyl-3-(all-trans-polyprenyl)benzene-1,4-diol + AH2 + O2 = a 3-demethylubiquinol + A + H2O. It participates in cofactor biosynthesis; ubiquinone biosynthesis. In terms of biological role, catalyzes the hydroxylation of 2-nonaprenyl-3-methyl-6-methoxy-1,4-benzoquinol during ubiquinone biosynthesis. This chain is 3-demethoxyubiquinol 3-hydroxylase, found in Nitrosococcus oceani (strain ATCC 19707 / BCRC 17464 / JCM 30415 / NCIMB 11848 / C-107).